We begin with the raw amino-acid sequence, 247 residues long: Cyclin-Q (247 aa).

Belongs to the cyclin family. Cyclin-like FAM58 subfamily.

In terms of biological role, may be an activating cyclin for the cyclin-associated kinase CDK10. In Danio rerio (Zebrafish), this protein is Cyclin-Q (ccnq).